A 199-amino-acid chain; its full sequence is Chaperone protein TorD (199 aa).

Belongs to the TorD/DmsD family. TorD subfamily.

The protein localises to the cytoplasm. Involved in the biogenesis of TorA. Acts on TorA before the insertion of the molybdenum cofactor and, as a result, probably favors a conformation of the apoenzyme that is competent for acquiring the cofactor. In Escherichia coli O157:H7 (strain EC4115 / EHEC), this protein is Chaperone protein TorD.